The primary structure comprises 477 residues: Glycogen synthase (477 aa).

Lysine 15 is an ADP-alpha-D-glucose binding site.

This sequence belongs to the glycosyltransferase 1 family. Bacterial/plant glycogen synthase subfamily.

The catalysed reaction is [(1-&gt;4)-alpha-D-glucosyl](n) + ADP-alpha-D-glucose = [(1-&gt;4)-alpha-D-glucosyl](n+1) + ADP + H(+). It participates in glycan biosynthesis; glycogen biosynthesis. In terms of biological role, synthesizes alpha-1,4-glucan chains using ADP-glucose. The protein is Glycogen synthase of Streptococcus pneumoniae serotype 2 (strain D39 / NCTC 7466).